Reading from the N-terminus, the 234-residue chain is Orotate phosphoribosyltransferase (234 aa).

A 5-phospho-alpha-D-ribose 1-diphosphate-binding site is contributed by Lys30. Position 38-39 (38-39 (FF)) interacts with orotate. 5-phospho-alpha-D-ribose 1-diphosphate-binding positions include 76-77 (YK), Arg103, Lys104, Lys107, His109, and 128-136 (DDVITAGTA). Orotate-binding residues include Thr132 and Arg160.

This sequence belongs to the purine/pyrimidine phosphoribosyltransferase family. PyrE subfamily. As to quaternary structure, homodimer. Mg(2+) is required as a cofactor.

The enzyme catalyses orotidine 5'-phosphate + diphosphate = orotate + 5-phospho-alpha-D-ribose 1-diphosphate. Its pathway is pyrimidine metabolism; UMP biosynthesis via de novo pathway; UMP from orotate: step 1/2. Catalyzes the transfer of a ribosyl phosphate group from 5-phosphoribose 1-diphosphate to orotate, leading to the formation of orotidine monophosphate (OMP). This Chromohalobacter salexigens (strain ATCC BAA-138 / DSM 3043 / CIP 106854 / NCIMB 13768 / 1H11) protein is Orotate phosphoribosyltransferase.